Consider the following 216-residue polypeptide: Cytochrome c biogenesis ATP-binding export protein CcmA (216 aa).

The ABC transporter domain occupies 11 to 216; the sequence is VSASKLTCIR…RKIRLDYRFV (206 aa). 43–50 serves as a coordination point for ATP; sequence GPNGAGKT.

Belongs to the ABC transporter superfamily. CcmA exporter (TC 3.A.1.107) family. As to quaternary structure, the complex is composed of two ATP-binding proteins (CcmA) and two transmembrane proteins (CcmB).

Its subcellular location is the cell inner membrane. It catalyses the reaction heme b(in) + ATP + H2O = heme b(out) + ADP + phosphate + H(+). Functionally, part of the ABC transporter complex CcmAB involved in the biogenesis of c-type cytochromes; once thought to export heme, this seems not to be the case, but its exact role is uncertain. Responsible for energy coupling to the transport system. The polypeptide is Cytochrome c biogenesis ATP-binding export protein CcmA (Shewanella sp. (strain MR-7)).